Consider the following 294-residue polypeptide: Histone deacetylase HDT3 (294 aa).

M1 carries the N-acetylmethionine modification. The tract at residues 2–5 (EFWG) is required to repress transcription. Residues 124–269 (QVNFQLPNED…TPKSAGAFGC (146 aa)) are disordered. Residues 140 to 188 (DDADGSEEDSSDDDDSENSGDEEEEKVTAESDSEEDDSSDDEEDDSSEE) show a composition bias toward acidic residues. Residues 189 to 202 (ETPKKPEEPKKRSA) show a composition bias toward basic and acidic residues. The span at 203–213 (EPNSSKNPASN) shows a compositional bias: low complexity. A compositionally biased stretch (polar residues) spans 252-262 (GETSKQQQTPK). The C2H2-type zinc finger occupies 267–290 (FGCKSCTRTFTSEMGLQSHTKAKH).

The protein belongs to the histone deacetylase HD2 family. In terms of assembly, interacts with DNMT2. As to expression, expressed in leaves, roots, stems, young plantlets, flowers and siliques. Highest levels in ovules, embryos, shoot apical meristems and first leaves. Also expressed in somatic embryos.

Its subcellular location is the nucleus. The protein localises to the nucleolus. Probably mediates the deacetylation of lysine residues on the N-terminal part of the core histones (H2A, H2B, H3 and H4). Histone deacetylation gives a tag for epigenetic repression and plays an important role in transcriptional regulation, cell cycle progression and developmental events. Involved in the modulation of abscisic acid and stress-responsive genes. This chain is Histone deacetylase HDT3 (HDT3), found in Arabidopsis thaliana (Mouse-ear cress).